A 761-amino-acid polypeptide reads, in one-letter code: Putative pentatricopeptide repeat-containing protein At2g02150 (761 aa).

PPR repeat units follow at residues 141–175, 191–225, 226–260, 261–295, 296–330, 331–365, 366–400, 401–435, 436–470, 471–505, 506–540, 541–575, 576–606, 612–646, 647–681, 682–716, and 717–751; these read SVES…KADC, GFGV…RVFP, KTRS…GARP, TVFT…GLVP, DTVT…CCEP, DVIT…GLKP, NVVS…GLVP, NEYT…GVEW, NVVT…GVIP, NLAS…GIKP, DLLL…GIKA, NSLI…DIEV, TVVT…ISND, NAAI…GLVP, DRTA…GMKL, DLLA…GIHP, and DEVL…QLLT.

It belongs to the PPR family. P subfamily.

This Arabidopsis thaliana (Mouse-ear cress) protein is Putative pentatricopeptide repeat-containing protein At2g02150.